The following is a 404-amino-acid chain: WD repeat and SOCS box-containing protein 2 (404 aa).

WD repeat units lie at residues 105-148 (PPSR…LLLN), 151-191 (GHQD…KQIQ), 195-234 (GHLQ…LIRK), 237-276 (GHQS…RLRS), and 291-330 (VHMS…PVAF). Residues 356–404 (HVQFWTAPRVLSSLKHLCRKALRSFLTTYQVLALPIPKKMKEFLTYRTF) enclose the SOCS box domain.

The protein operates within protein modification; protein ubiquitination. Its function is as follows. May be a substrate-recognition component of a SCF-like ECS (Elongin-Cullin-SOCS-box protein) E3 ubiquitin ligase complex which mediates the ubiquitination and subsequent proteasomal degradation of target proteins. This Mus musculus (Mouse) protein is WD repeat and SOCS box-containing protein 2 (Wsb2).